The sequence spans 530 residues: Lanosterol 14-alpha demethylase CYP51 (530 aa).

Topologically, residues 1-20 (MSATKSIVGEALEYVNIGLS) are lumenal. Residues 21-41 (HFLALPLAQRISLIIIIPFIY) form a helical membrane-spanning segment. At 42 to 530 (NIVWQLLYSL…WEKRNPEQKI (489 aa)) the chain is on the cytoplasmic side. K116 is covalently cross-linked (Glycyl lysine isopeptide (Lys-Gly) (interchain with G-Cter in ubiquitin)). Y126 lines the lanosterol pocket. Position 314 (G314) interacts with itraconazole. Glycyl lysine isopeptide (Lys-Gly) (interchain with G-Cter in ubiquitin) cross-links involve residues K353 and K454. S458 is subject to Phosphoserine. Position 470 (C470) interacts with heme.

Belongs to the cytochrome P450 family. Interacts with ERG28. Heme serves as cofactor.

The protein resides in the endoplasmic reticulum membrane. It carries out the reaction a 14alpha-methyl steroid + 3 reduced [NADPH--hemoprotein reductase] + 3 O2 = a Delta(14) steroid + formate + 3 oxidized [NADPH--hemoprotein reductase] + 4 H2O + 4 H(+). The catalysed reaction is a 14alpha-methyl steroid + reduced [NADPH--hemoprotein reductase] + O2 = a 14alpha-hydroxymethyl steroid + oxidized [NADPH--hemoprotein reductase] + H2O + H(+). It catalyses the reaction a 14alpha-hydroxymethyl steroid + reduced [NADPH--hemoprotein reductase] + O2 = a 14alpha-formyl steroid + oxidized [NADPH--hemoprotein reductase] + 2 H2O + H(+). The enzyme catalyses a 14alpha-formyl steroid + reduced [NADPH--hemoprotein reductase] + O2 = a Delta(14) steroid + formate + oxidized [NADPH--hemoprotein reductase] + H2O + 2 H(+). It carries out the reaction lanosterol + 3 reduced [NADPH--hemoprotein reductase] + 3 O2 = 4,4-dimethyl-5alpha-cholesta-8,14,24-trien-3beta-ol + formate + 3 oxidized [NADPH--hemoprotein reductase] + 4 H2O + 4 H(+). The catalysed reaction is lanosterol + reduced [NADPH--hemoprotein reductase] + O2 = 32-hydroxylanosterol + oxidized [NADPH--hemoprotein reductase] + H2O + H(+). It catalyses the reaction 32-hydroxylanosterol + reduced [NADPH--hemoprotein reductase] + O2 = 32-oxolanosterol + oxidized [NADPH--hemoprotein reductase] + 2 H2O + H(+). The enzyme catalyses 32-oxolanosterol + reduced [NADPH--hemoprotein reductase] + O2 = 4,4-dimethyl-5alpha-cholesta-8,14,24-trien-3beta-ol + formate + oxidized [NADPH--hemoprotein reductase] + H2O + 2 H(+). It functions in the pathway steroid biosynthesis; zymosterol biosynthesis; zymosterol from lanosterol: step 1/6. Sterol 14alpha-demethylase that plays a critical role in the third module of ergosterol biosynthesis pathway, being ergosterol the major sterol component in fungal membranes that participates in a variety of functions. The third module or late pathway involves the ergosterol synthesis itself through consecutive reactions that mainly occur in the endoplasmic reticulum (ER) membrane. Starting from lanosterol (lanosta-8,24-dien-3beta-ol), it catalyzes the three-step oxidative removal of the 14alpha-methyl group (C-32) of the sterol in the form of formate, and converts the sterol to 4,4-dimethyl-5alpha-cholesta-8,14,24-trien-3beta-ol, which is critical for ergosterol biosynthesis. Can demethylate substrates not intrinsic to yeast, such as eburicol (24-methylene-24,25-dihydrolanosterol) at a similar rate to lanosterol, and at a lower rate the 24,25-dihydrolanosterol (DHL) to 4,4-dimethyl-8,14-cholestadien-3beta-ol. This Saccharomyces cerevisiae (strain ATCC 204508 / S288c) (Baker's yeast) protein is Lanosterol 14-alpha demethylase CYP51.